A 356-amino-acid polypeptide reads, in one-letter code: OVARIAN TUMOR DOMAIN-containing deubiquitinating enzyme 10 (356 aa).

Positions 86–117 (DYSHQNQQQQHQQEGYTNNYSNNNNGYAWNDQ) are disordered. Residues 89–115 (HQNQQQQHQQEGYTNNYSNNNNGYAWN) show a composition bias toward low complexity. One can recognise an OTU domain in the interval 213–337 (FTEVKVPGDG…EVHYNAIYLN (125 aa)). The active site involves aspartate 221. The Nucleophile role is filled by cysteine 224. Histidine 330 is an active-site residue.

The protein belongs to the peptidase C85 family.

It catalyses the reaction Thiol-dependent hydrolysis of ester, thioester, amide, peptide and isopeptide bonds formed by the C-terminal Gly of ubiquitin (a 76-residue protein attached to proteins as an intracellular targeting signal).. Functionally, hydrolase that can remove conjugated ubiquitin from proteins in vitro and may therefore play an important regulatory role at the level of protein turnover by preventing degradation. Cysteine protease with a preference for 'Lys-63' over 'Lys-48' over 'Met-1' -linked ubiquitin (UB) tetramers as substrates. Also cleaves RUB-GST fusion. In Arabidopsis thaliana (Mouse-ear cress), this protein is OVARIAN TUMOR DOMAIN-containing deubiquitinating enzyme 10.